The sequence spans 932 residues: DNA mismatch repair protein MutS (932 aa).

ATP is bound at residue 615 to 622; it reads GPNMAGKS.

The protein belongs to the DNA mismatch repair MutS family.

Its function is as follows. This protein is involved in the repair of mismatches in DNA. It is possible that it carries out the mismatch recognition step. This protein has a weak ATPase activity. In Clostridium botulinum (strain Langeland / NCTC 10281 / Type F), this protein is DNA mismatch repair protein MutS.